We begin with the raw amino-acid sequence, 156 residues long: MASRVLSAYVSRLPAAFAPLPRVRMLAVARPLSTALCSAGTQTRLGTLQPALVLAQVPGRVTQLCRQYSDMPPLTLEGIQDRVLYVLKLYDKIDPEKLSVNSHFMKDLGLDSLDQVEIIMAMEDEFGFEIPDIDAEKLMCPQEIVDYIADKKDVYE.

The transit peptide at 1-68 directs the protein to the mitochondrion; the sequence is MASRVLSAYV…GRVTQLCRQY (68 aa). Residues 77–152 enclose the Carrier domain; it reads EGIQDRVLYV…EIVDYIADKK (76 aa). The residue at position 88 (K88) is an N6-acetyllysine. The residue at position 112 (S112) is an O-(pantetheine 4'-phosphoryl)serine.

Belongs to the acyl carrier protein (ACP) family. Mammalian complex I is composed of 45 different subunits. Interacts with ETFRF1. Identified in a complex composed of MALSU1, MIEF1 upstream open reading frame protein and NDUFAB1; within the trimeric complex, MIEF1 upstream open reading frame protein functions as a bridging scaffold that interacts with MALSU1 on one side, and with NDUFAB1 on the other side. The complex interacts with the mitochondrial large ribosomal subunit. Interacts with alpha-1-microglobulin chain; this interaction is required for the maintenance of mitochondrial redox homeostasis. Component of the mitochondrial core iron-sulfur cluster (ISC) complex composed of NFS1, LYRM4, NDUFAB1, ISCU, FXN, and FDX2; this complex is a heterohexamer containing two copies of each monomer. Component of the cyteine desulfurase complex composed of NFS1, LYRM4 and NDUFAB1; this complex contributes to the stability and cysteine desulfurase activity of NFS1. Phosphopantetheinylation at Ser-112 is essential for interactions with LYR motif-containing proteins.

The protein resides in the mitochondrion. Functionally, carrier of the growing fatty acid chain in fatty acid biosynthesis. Accessory and non-catalytic subunit of the mitochondrial membrane respiratory chain NADH dehydrogenase (Complex I), which functions in the transfer of electrons from NADH to the respiratory chain. Accessory protein, of the core iron-sulfur cluster (ISC) assembly complex, that regulates, in association with LYRM4, the stability and the cysteine desulfurase activity of NFS1 and participates in the [2Fe-2S] clusters assembly on the scaffolding protein ISCU. The core iron-sulfur cluster (ISC) assembly complex is involved in the de novo synthesis of a [2Fe-2S] cluster, the first step of the mitochondrial iron-sulfur protein biogenesis. This process is initiated by the cysteine desulfurase complex (NFS1:LYRM4:NDUFAB1) that produces persulfide which is delivered on the scaffold protein ISCU in a FXN-dependent manner. Then this complex is stabilized by FDX2 which provides reducing equivalents to accomplish the [2Fe-2S] cluster assembly. Finally, the [2Fe-2S] cluster is transferred from ISCU to chaperone proteins, including HSCB, HSPA9 and GLRX5. This Gorilla gorilla gorilla (Western lowland gorilla) protein is Acyl carrier protein, mitochondrial.